The following is a 448-amino-acid chain: tRNA-2-methylthio-N(6)-dimethylallyladenosine synthase (448 aa).

The 119-residue stretch at 2–120 (KKYRIIVFGC…LPELIGKVIE (119 aa)) folds into the MTTase N-terminal domain. [4Fe-4S] cluster is bound by residues Cys-11, Cys-47, Cys-81, Cys-158, Cys-162, and Cys-165. The 231-residue stretch at 144 to 374 (RKEGVRAWVT…IKLQNKISLE (231 aa)) folds into the Radical SAM core domain. The region spanning 377 to 440 (EEEVGQTQEV…LAHLTGILSY (64 aa)) is the TRAM domain.

This sequence belongs to the methylthiotransferase family. MiaB subfamily. As to quaternary structure, monomer. [4Fe-4S] cluster serves as cofactor.

The protein resides in the cytoplasm. The catalysed reaction is N(6)-dimethylallyladenosine(37) in tRNA + (sulfur carrier)-SH + AH2 + 2 S-adenosyl-L-methionine = 2-methylsulfanyl-N(6)-dimethylallyladenosine(37) in tRNA + (sulfur carrier)-H + 5'-deoxyadenosine + L-methionine + A + S-adenosyl-L-homocysteine + 2 H(+). In terms of biological role, catalyzes the methylthiolation of N6-(dimethylallyl)adenosine (i(6)A), leading to the formation of 2-methylthio-N6-(dimethylallyl)adenosine (ms(2)i(6)A) at position 37 in tRNAs that read codons beginning with uridine. The sequence is that of tRNA-2-methylthio-N(6)-dimethylallyladenosine synthase from Pelotomaculum thermopropionicum (strain DSM 13744 / JCM 10971 / SI).